A 349-amino-acid chain; its full sequence is Pinopsin (349 aa).

The span at 1-16 shows a compositional bias: polar residues; sequence MDPTNSPQEPPHTSTP. The interval 1 to 22 is disordered; sequence MDPTNSPQEPPHTSTPGPFDGP. The Extracellular portion of the chain corresponds to 1-32; sequence MDPTNSPQEPPHTSTPGPFDGPQWPHQAPRGM. The chain crosses the membrane as a helical span at residues 33-57; that stretch reads YLSVAVLMGIVVISASVVNGLVIVV. Over 58 to 69 the chain is Cytoplasmic; that stretch reads SIRYKKLRSPLN. The helical transmembrane segment at 70–94 threads the bilayer; that stretch reads YILVNLAMADLLVTLCGSSVSFSNN. The Extracellular segment spans residues 95 to 109; it reads INGFFVFGKRLCELE. The cysteines at positions 106 and 183 are disulfide-linked. Residues 110 to 129 form a helical membrane-spanning segment; the sequence is GFMVSLTGIVGLWSLAILAL. The Cytoplasmic portion of the chain corresponds to 130-148; it reads ERYVVVCRPLGDFRFQHRH. A helical membrane pass occupies residues 149–172; that stretch reads AVTGCAFTWVWSLLWTTPPLLGWS. Topologically, residues 173-196 are extracellular; that stretch reads SYVPEGLRTSCGPNWYTGGSNNNS. A glycan (N-linked (GlcNAc...) asparagine) is linked at N194. Residues 197 to 224 traverse the membrane as a helical segment; the sequence is YILTLFVTCFVMPLSLILFSYANLLMTL. At 225 to 246 the chain is on the cytoplasmic side; it reads RAAAAQQQESDTTQQAERQVTR. A helical membrane pass occupies residues 247-270; that stretch reads MVVAMVMAFLICWLPYTTFALVVA. The Extracellular segment spans residues 271–278; that stretch reads TNKDIAIQ. A helical transmembrane segment spans residues 279 to 303; sequence PALASLPSYFSKTATVYNPIIYVFM. Residue K290 is modified to N6-(retinylidene)lysine. The Cytoplasmic segment spans residues 304–349; the sequence is NKQFQSCLLKMLCCGHHPRGTGRTAPAAPASPTDGLRNKVTPSHPV. Residues C316 and C317 are each lipidated (S-palmitoyl cysteine). The disordered stretch occupies residues 325 to 349; the sequence is GRTAPAAPASPTDGLRNKVTPSHPV.

This sequence belongs to the G-protein coupled receptor 1 family. Opsin subfamily. Phosphorylated on some or all of the serine and threonine residues present in the C-terminal region. Pineal gland.

The protein resides in the membrane. Functionally, produces a slow and prolonged phototransduction response consistent with the non-visual function of pineal photoreception. The sequence is that of Pinopsin from Columba livia (Rock dove).